Consider the following 361-residue polypeptide: Phospho-N-acetylmuramoyl-pentapeptide-transferase (361 aa).

10 helical membrane-spanning segments follow: residues 28–48 (LSMFTSMFVVLLIGTPFIKFF), 70–90 (IGTPTMGGVLILLGLFSGILL), 94–114 (LSNYHIWFLLFIVSGFGLLGA), 129–149 (VSFKFKIISQILIAIVGIYGL), 169–189 (LIINLGWFFIPFSIFIIVGSS), 205–225 (PVILVAACFAFISYVTGNIVF), 237–257 (MGEVSVFCGSIIGACLGFLWF), 264–284 (IFMGDTGSLALGGSLGAIGII), 289–309 (IVLAITGGLFVLEAVSVIIQV), and 338–358 (TVVIRFWIISIILAMIGLATL).

Belongs to the glycosyltransferase 4 family. MraY subfamily. Requires Mg(2+) as cofactor.

The protein resides in the cell inner membrane. It carries out the reaction UDP-N-acetyl-alpha-D-muramoyl-L-alanyl-gamma-D-glutamyl-meso-2,6-diaminopimeloyl-D-alanyl-D-alanine + di-trans,octa-cis-undecaprenyl phosphate = di-trans,octa-cis-undecaprenyl diphospho-N-acetyl-alpha-D-muramoyl-L-alanyl-D-glutamyl-meso-2,6-diaminopimeloyl-D-alanyl-D-alanine + UMP. Its pathway is cell wall biogenesis; peptidoglycan biosynthesis. Its function is as follows. Catalyzes the initial step of the lipid cycle reactions in the biosynthesis of the cell wall peptidoglycan: transfers peptidoglycan precursor phospho-MurNAc-pentapeptide from UDP-MurNAc-pentapeptide onto the lipid carrier undecaprenyl phosphate, yielding undecaprenyl-pyrophosphoryl-MurNAc-pentapeptide, known as lipid I. This is Phospho-N-acetylmuramoyl-pentapeptide-transferase from Pelagibacter ubique (strain HTCC1062).